The sequence spans 278 residues: Inositol oxygenase (278 aa).

Residues Arg22 and 78 to 80 each bind substrate; that span reads DES. Fe cation contacts are provided by His91, His116, and Asp117. Residues Lys120 and 134 to 135 each bind substrate; that span reads GD. His187, His213, and Asp246 together coordinate Fe cation. 213-214 serves as a coordination point for substrate; sequence HS.

It belongs to the myo-inositol oxygenase family. It depends on Fe cation as a cofactor.

It localises to the cytoplasm. The enzyme catalyses myo-inositol + O2 = D-glucuronate + H2O + H(+). It functions in the pathway polyol metabolism; myo-inositol degradation into D-glucuronate; D-glucuronate from myo-inositol: step 1/1. The protein is Inositol oxygenase (miox) of Danio rerio (Zebrafish).